Here is a 214-residue protein sequence, read N- to C-terminus: NADH-ubiquinone oxidoreductase chain 5 (214 aa).

Transmembrane regions (helical) follow at residues 14–34, 58–78, 92–112, and 192–212; these read LNTWALLLTLMATAFTATYSI, PLITAPLTRLALGSITAGMII, MPLITKTAAILMTILGIILAL, and TGLIKAYLGSFALSILVMILM.

This sequence belongs to the complex I subunit 5 family.

Its subcellular location is the mitochondrion inner membrane. The enzyme catalyses a ubiquinone + NADH + 5 H(+)(in) = a ubiquinol + NAD(+) + 4 H(+)(out). Core subunit of the mitochondrial membrane respiratory chain NADH dehydrogenase (Complex I) that is believed to belong to the minimal assembly required for catalysis. Complex I functions in the transfer of electrons from NADH to the respiratory chain. The immediate electron acceptor for the enzyme is believed to be ubiquinone. The sequence is that of NADH-ubiquinone oxidoreductase chain 5 (MT-ND5) from Anser caerulescens (Snow goose).